Reading from the N-terminus, the 625-residue chain is DNA-directed RNA polymerase subunit gamma (625 aa).

The Zn(2+) site is built by cysteine 71, cysteine 73, cysteine 86, and cysteine 89. Positions 467, 469, and 471 each coordinate Mg(2+).

Belongs to the RNA polymerase beta' chain family. RpoC1 subfamily. As to quaternary structure, in cyanobacteria the RNAP catalytic core is composed of 2 alpha, 1 beta, 1 beta', 1 gamma and 1 omega subunit. When a sigma factor is associated with the core the holoenzyme is formed, which can initiate transcription. It depends on Mg(2+) as a cofactor. The cofactor is Zn(2+).

It carries out the reaction RNA(n) + a ribonucleoside 5'-triphosphate = RNA(n+1) + diphosphate. DNA-dependent RNA polymerase catalyzes the transcription of DNA into RNA using the four ribonucleoside triphosphates as substrates. This chain is DNA-directed RNA polymerase subunit gamma, found in Nostoc punctiforme (strain ATCC 29133 / PCC 73102).